A 297-amino-acid chain; its full sequence is Heme A synthase (297 aa).

Topologically, residues 1-6 (MHKRLK) are cytoplasmic. A helical transmembrane segment spans residues 7–27 (IYSVITSIGVLIVLLQGALVT). The Extracellular segment spans residues 28-62 (KTGSGEGCGATWPLCFGEVIPTNPAIETIIEYSHR). Residues C35 and C42 are joined by a disulfide bond. E58 is an active-site residue. H61 serves as a coordination point for heme o. Residues 63-83 (IVSGLVGAMIIILAIWAWKQL) traverse the membrane as a helical segment. The Cytoplasmic portion of the chain corresponds to 84 to 93 (KHMREAKALS). A helical transmembrane segment spans residues 94-114 (FAAVILIIFQGLLGAGAVVFG). The Extracellular portion of the chain corresponds to 115 to 118 (QSKA). Residues 119 to 139 (ILALHFGISAMSLAAVVLLTI) traverse the membrane as a helical segment. H123 contacts heme o. Residues 140–156 (LAFEDGREHTMAPKVSR) lie on the Cytoplasmic side of the membrane. The helical transmembrane segment at 157–177 (GFKYYVFFVITYCYAVIYSGA) threads the bilayer. At 178–210 (YVKHSEATLACAGFPLCNGQIFPGLYGPVGAHY) the chain is on the extracellular side. C188 and C194 are disulfide-bonded. The helical transmembrane segment at 211–231 (FHRVVGTILLLFLLILMIWTL) threads the bilayer. H212 serves as a coordination point for heme b. Topologically, residues 232 to 242 (SRYRHYRVLTW) are cytoplasmic. Residues 243–263 (TAVLSFLLVVGQFISGISIVF) form a helical membrane-spanning segment. Topologically, residues 264–271 (TQNALSVG) are extracellular. A helical membrane pass occupies residues 272–292 (LIHALIISILFSALSYMTMII). A heme b-binding site is contributed by H274. Residues 293–297 (TRPSH) lie on the Cytoplasmic side of the membrane.

Belongs to the COX15/CtaA family. Type 1 subfamily. As to quaternary structure, interacts with CtaB. Heme b serves as cofactor.

It localises to the cell membrane. The enzyme catalyses Fe(II)-heme o + 2 A + H2O = Fe(II)-heme a + 2 AH2. Its pathway is porphyrin-containing compound metabolism; heme A biosynthesis; heme A from heme O: step 1/1. Catalyzes the conversion of heme O to heme A by two successive hydroxylations of the methyl group at C8. The first hydroxylation forms heme I, the second hydroxylation results in an unstable dihydroxymethyl group, which spontaneously dehydrates, resulting in the formyl group of heme A. The chain is Heme A synthase from Alkalihalophilus pseudofirmus (strain ATCC BAA-2126 / JCM 17055 / OF4) (Bacillus pseudofirmus).